Consider the following 657-residue polypeptide: Hemocyanin (657 aa).

An N-linked (GlcNAc...) asparagine glycan is attached at asparagine 167. 6 residues coordinate Cu cation: histidine 194, histidine 198, histidine 224, histidine 344, histidine 348, and histidine 384. 2 cysteine pairs are disulfide-bonded: cysteine 483–cysteine 502 and cysteine 562–cysteine 609.

This sequence belongs to the tyrosinase family. Hemocyanin subfamily. As to quaternary structure, it consists of at least four very similar subunits. In terms of tissue distribution, hemolymph.

It is found in the secreted. The protein resides in the extracellular space. In terms of biological role, hemocyanins are copper-containing oxygen carriers occurring freely dissolved in the hemolymph of many mollusks and arthropods. The chain is Hemocyanin from Palinurus vulgaris (European spiny lobster).